The primary structure comprises 218 residues: Phosphoglycolate phosphatase (218 aa).

Residue aspartate 7 is the Nucleophile of the active site. Mg(2+)-binding residues include aspartate 7, aspartate 9, and aspartate 167.

It belongs to the HAD-like hydrolase superfamily. CbbY/CbbZ/Gph/YieH family. Requires Mg(2+) as cofactor.

It carries out the reaction 2-phosphoglycolate + H2O = glycolate + phosphate. Its pathway is organic acid metabolism; glycolate biosynthesis; glycolate from 2-phosphoglycolate: step 1/1. Specifically catalyzes the dephosphorylation of 2-phosphoglycolate. Is involved in the dissimilation of the intracellular 2-phosphoglycolate formed during the DNA repair of 3'-phosphoglycolate ends, a major class of DNA lesions induced by oxidative stress. The sequence is that of Phosphoglycolate phosphatase from Cereibacter sphaeroides (Rhodobacter sphaeroides).